The primary structure comprises 1679 residues: MGETEEERTSQAGQLFENFIQATTCKGTLQAFSVLCRQLELNPSDHRGFYSSLKTAVTFWKAKGLWGKLDKRAGHKEYSKGRACADTRCLIIGGGPCGFRTAIELALLGAKVVVIEKRDTFSRNNVLHLWPYTIHDLRNLGAKKFYGKFCAGSIDHISIRQLQLMLLKIALIVGVEVHVNVEFVKLLEPPEDQSTDGQGWRAEIRPADNPVSDYEFDVIIGADGRRSTLDGFRRKEFRGKLAIAITANFVNRNTTAEAKVEEISGVAFIFNQKFFLELKEETGIDLENIVYYKDNTHYFVMTAKKQSLLDKGVIINDYIETERLLAFDNVNQEALLSYAREAADFGTNYQLPSLDYAINHYGQPDVAMFDFTCMYASENAALVREKSHRQLLVALVGDSLLEPFWPMGTGCARGFLAAFDTAWMIKGWAQGKEPLDLLSERESIYRLLPQTTAENISKNFEQYTIDPATRYPNLNSSCVRPHQVRHLFISGEQDLSSLERSGQTRRSVSISRRESEVRPGRLLLWCQNQTQDYRGVNVTDLNTSWRSGLALCALIHRQRPELIDFDSLNEADCAKNNQLAFDVAEREFGIQPVTTGKEMDAERGPDKLIMVLYLSKFYEMFHKSTQSVTGLPKEIDANNGDCSSKTANSLYNSINHARKRIPKLDKKLEESDVNRKRKKASSHHEELMSCQTAPPAGEREEQKENKVRSMATQLLARFEENAPSCALRRQSDSESDSDADRPVSLDLTENPRFARPKIEPTHPSTTPDKAKWQPSPYLRLLESNTRSETLHTEHYVESQSSHRLTEIQSECQYSSVSSAYKSSERRPRSPLIPFTPTLSPMMHCLQQLEEQVIQQRKREPLNRKSIKERAQKLSSLFTGNPAQPQTDESSPAVSPSSPPQTIPESSTLSCLLSPAPSLTHKQCSEASETHLKADKHTEIRRVERLDPSKQRTVGKVSSAIGVKAATLAILYETDHRPNNPITLSLTEARRCAESGLVSVRKEFSASLGGSDTCVFCQKRVYIMERLSAEGFFFHRECFRCHICGCSLRLGAHTFDSQQGTFYCKMHFSQRKTSTRHRRGEIQDGGIRSSSITISNHTSTDGTRGQPSGGEFDSSTQQDLQTLPDSKEIISVSEVKDSSKKADPADSAPACPDSPLQKVKRSTAKGEITNKNILWKKKIRSTLPLVLMKKFHRGKPEDKTEVLAEEDGNSDFEEIHESLSSKKPSNPSTDSNCLPTKDNSSTPLDEIPKIPLYRTHVLPEYPKPSSSSPEPIVTSISSDPISFSPKKKLTLSLSEKEKLLNWDLTNPGKSGAEEQQQQHVKPSISLQHDHPEPTHPQPEPAPPLFGFQQWANNLRKSFSKGSNPVVLRRNRPMKARPLSEGSFNVGAVFQDEERCGSLVDEGEARPRTESEIASLLEQVALGSKTSRGTKDDMASLPPRKLNFFSSLRIKRVEGAEQSRGEGQKDILSILSRFRNKASAQQQQQQKSNSSSEDEQEPKLTHSGALQKKKEKIAIRQTKSDELKRLHRAQVIQRQLEEVEEKQRSLEEKGVALEKVLRGENGDDGSTDEAALLQTWFKLVLEKNKLSRYESELMIFAQELELEDTQSRLQQDLRRRMATEDCEKSASELVEEQNILVEIMKVVEKRDKLVSLLEEQRLKEKAEDRDLESLILSRGYQFHWT.

A monooxygenase domain region spans residues 2-494; the sequence is GETEEERTSQ…RHLFISGEQD (493 aa). FAD contacts are provided by residues C97, 97 to 125, E116, R118, R123, N125, and D398; that span reads CGFR…SRNN. In terms of domain architecture, Calponin-homology (CH) spans 516–619; that stretch reads EVRPGRLLLW…MVLYLSKFYE (104 aa). A Nuclear localization signal motif is present at residues 658–679; that stretch reads RKRIPKLDKKLEESDVNRKRKK. 8 disordered regions span residues 661-772, 818-838, 874-907, 1073-1163, 1194-1247, 1259-1283, 1302-1342, and 1473-1509; these read IPKL…KAKW, SAYK…TPTL, SSLF…ESST, STRH…RSTA, KPED…DEIP, EYPK…ISFS, DLTN…PAPP, and RNKA…KKKE. Composition is skewed to basic and acidic residues over residues 662–674 and 697–707; these read PKLD…SDVN and GEREEQKENKV. The segment covering 874–888 has biased composition (polar residues); the sequence is SSLFTGNPAQPQTDE. Positions 1011–1073 constitute an LIM zinc-binding domain; sequence DTCVFCQKRV…KMHFSQRKTS (63 aa). Residues 1086-1099 are compositionally biased toward low complexity; the sequence is IRSSSITISNHTST. Residues 1112–1123 show a composition bias toward polar residues; sequence DSSTQQDLQTLP. Residues 1133 to 1143 show a composition bias toward basic and acidic residues; it reads EVKDSSKKADP. Over residues 1144–1154 the composition is skewed to low complexity; it reads ADSAPACPDSP. A compositionally biased stretch (acidic residues) spans 1202 to 1211; sequence LAEEDGNSDF. Residues 1220–1242 show a composition bias toward polar residues; that stretch reads SKKPSNPSTDSNCLPTKDNSSTP. Residues 1259–1270 show a composition bias toward low complexity; it reads EYPKPSSSSPEP. The segment covering 1302-1325 has biased composition (polar residues); it reads DLTNPGKSGAEEQQQQHVKPSISL. Pro residues predominate over residues 1333-1342; the sequence is THPQPEPAPP. A compositionally biased stretch (low complexity) spans 1475–1489; sequence KASAQQQQQQKSNSS. In terms of domain architecture, bMERB spans 1517–1667; that stretch reads KSDELKRLHR…EKAEDRDLES (151 aa).

This sequence belongs to the Mical family. The cofactor is FAD.

It is found in the nucleus. The protein resides in the cytoplasm. It catalyses the reaction L-methionyl-[F-actin] + NADPH + O2 + H(+) = L-methionyl-(R)-S-oxide-[F-actin] + NADP(+) + H2O. Nuclear monooxygenase that promotes depolymerization of F-actin by mediating oxidation of specific methionine residues on actin and regulates the srf signaling. Acts by modifying nuclear actin subunits through the addition of oxygen to form methionine-sulfoxide, leading to promote actin filament severing and prevent repolymerization. Acts as a key regulator of the srf signaling pathway elicited by nerve growth factor and serum: mediates oxidation and subsequent depolymerization of nuclear actin, leading to increase mkl1/mrtf-a presence in the nucleus and promote srf:mkl1/mrtf-a-dependent gene transcription. This Danio rerio (Zebrafish) protein is [F-actin]-monooxygenase mical2b.